The primary structure comprises 170 residues: Translation machinery-associated protein 16 homolog (170 aa).

It belongs to the TMA16 family.

This Dictyostelium discoideum (Social amoeba) protein is Translation machinery-associated protein 16 homolog.